Consider the following 426-residue polypeptide: 3-phosphoshikimate 1-carboxyvinyltransferase (426 aa).

Lys23, Ser24, and Arg28 together coordinate 3-phosphoshikimate. Lys23 serves as a coordination point for phosphoenolpyruvate. Phosphoenolpyruvate is bound by residues Gly96 and Arg124. 3-phosphoshikimate contacts are provided by Thr170, Ser171, Gln172, Ser198, Asp314, and Lys341. Phosphoenolpyruvate is bound at residue Gln172. The active-site Proton acceptor is Asp314. Residues Arg345, Arg386, and Lys411 each contribute to the phosphoenolpyruvate site.

It belongs to the EPSP synthase family. Monomer.

The protein resides in the cytoplasm. It catalyses the reaction 3-phosphoshikimate + phosphoenolpyruvate = 5-O-(1-carboxyvinyl)-3-phosphoshikimate + phosphate. It participates in metabolic intermediate biosynthesis; chorismate biosynthesis; chorismate from D-erythrose 4-phosphate and phosphoenolpyruvate: step 6/7. Catalyzes the transfer of the enolpyruvyl moiety of phosphoenolpyruvate (PEP) to the 5-hydroxyl of shikimate-3-phosphate (S3P) to produce enolpyruvyl shikimate-3-phosphate and inorganic phosphate. The chain is 3-phosphoshikimate 1-carboxyvinyltransferase from Trichormus variabilis (strain ATCC 29413 / PCC 7937) (Anabaena variabilis).